The sequence spans 359 residues: Putative nucleotidyltransferase MAB21L1 (359 aa).

A ribonucleoside 5'-triphosphate contacts are provided by residues 23–24 (RK) and 63–66 (YEGL). 2 residues coordinate Mg(2+): glutamate 73 and glutamate 75. A ribonucleoside 5'-triphosphate is bound by residues lysine 248 and 252 to 255 (SLLK).

This sequence belongs to the mab-21 family. Monomer. Homodecamer; composed of 2 back to back homopentamers. The protein may exist as monomer in solution and oiligomerizes upon ligand binding.

The protein localises to the nucleus. Putative nucleotidyltransferase required for several aspects of embryonic development including normal development of the eye. It is unclear whether it displays nucleotidyltransferase activity in vivo. Binds single-stranded RNA (ssRNA). In Xenopus laevis (African clawed frog), this protein is Putative nucleotidyltransferase MAB21L1 (mab21l1).